The sequence spans 219 residues: Transcriptional regulatory protein QseB (219 aa).

The 115-residue stretch at 2–116 (RILLIEDDML…EVAARLEALM (115 aa)) folds into the Response regulatory domain. 4-aspartylphosphate is present on Asp51. A DNA-binding region (ompR/PhoB-type) is located at residues 124-218 (SNELRHGNVM…VHGIGYTLGE (95 aa)).

Phosphorylated by QseC.

It localises to the cytoplasm. Its function is as follows. Member of a two-component regulatory system QseB/QseC. Activates the flagella regulon by activating transcription of FlhDC. Currently it is not known whether this effect is direct or not. The sequence is that of Transcriptional regulatory protein QseB (qseB) from Escherichia coli O157:H7.